Consider the following 96-residue polypeptide: Small ubiquitin-related modifier 2 (96 aa).

Lysine 11 participates in a covalent cross-link: Glycyl lysine isopeptide (Lys-Gly) (interchain with G-Cter in SUMO). Positions 16–96 constitute a Ubiquitin-like domain; sequence DHINLKVAGQ…FQQQTGGHRI (81 aa). A Glycyl lysine isopeptide (Gly-Lys) (interchain with K-? in acceptor proteins) cross-link involves residue glycine 93. Residues 94-96 constitute a propeptide that is removed on maturation; it reads HRI.

The protein belongs to the ubiquitin family. SUMO subfamily. As to quaternary structure, interacts with sae2 and ube2i. Covalently attached to a number of proteins. In terms of processing, polymeric chains can be formed through Lys-11 cross-linking. Cleavage of precursor form by a sentrin-specific protease is necessary for function.

It is found in the nucleus. Ubiquitin-like protein that can be covalently attached to proteins as a monomer or as a lysine-linked polymer. Covalent attachment via an isopeptide bond to its substrates requires prior activation by the E1 complex sae1-sae2 and linkage to the E2 enzyme ube2i, and can be promoted by an E3 ligase such as pias1-4. This post-translational modification on lysine residues of proteins plays a crucial role in a number of cellular processes such as nuclear transport, DNA replication and repair, mitosis and signal transduction. Polymeric sumo2 chains are also susceptible to polyubiquitination which functions as a signal for proteasomal degradation of modified proteins. This Danio rerio (Zebrafish) protein is Small ubiquitin-related modifier 2.